Here is a 260-residue protein sequence, read N- to C-terminus: MMDLFPDALASACLQQFRATPPLVHCLTNEVVQSFTANVLLALGAFPAMVVEPQEAAQFSTMANSLLINIGTLHRARAESMLSAITAANQAGTPWVLDPVAVGGLAYRTDFARHLLTLKPAAIRGNASEIMALSGMATMGRGVDSVDTSLAALPAARQLAQRTQTVVAVTGEVDYITDGQRDVAVTGGDKLMTRVVGTGCALSAVVAAFCALEGDRLHHVATACRIMSQVGGQVSQHVAGPGSFVPAFLDGLYQLETLTY.

Methionine 49 lines the substrate pocket. 2 residues coordinate ATP: arginine 124 and threonine 170. Glycine 197 contacts substrate.

It belongs to the Thz kinase family. Mg(2+) serves as cofactor.

The catalysed reaction is 5-(2-hydroxyethyl)-4-methylthiazole + ATP = 4-methyl-5-(2-phosphooxyethyl)-thiazole + ADP + H(+). It functions in the pathway cofactor biosynthesis; thiamine diphosphate biosynthesis; 4-methyl-5-(2-phosphoethyl)-thiazole from 5-(2-hydroxyethyl)-4-methylthiazole: step 1/1. In terms of biological role, catalyzes the phosphorylation of the hydroxyl group of 4-methyl-5-beta-hydroxyethylthiazole (THZ). The protein is Hydroxyethylthiazole kinase of Yersinia enterocolitica serotype O:8 / biotype 1B (strain NCTC 13174 / 8081).